Consider the following 88-residue polypeptide: MKLFGKEQQNSKTMAKERLRLVLVQDRTNVSPELLQNLKEDLIAVITKYMEIDEKALEVNIDSHEDQVALIANIPIKNVKRSVRVQTN.

It belongs to the MinE family.

Its function is as follows. Prevents the cell division inhibition by proteins MinC and MinD at internal division sites while permitting inhibition at polar sites. This ensures cell division at the proper site by restricting the formation of a division septum at the midpoint of the long axis of the cell. The chain is Cell division topological specificity factor from Carboxydothermus hydrogenoformans (strain ATCC BAA-161 / DSM 6008 / Z-2901).